The sequence spans 313 residues: MLKMESTQQMVSSIINSSFEAAVVAATSTLELMGIQYDYNEVYTRVKSKFDLVMDDSGVKNNLMGKAATIDQALNGKFSSSIRNRNWMTDSKTDARLDEDVNKLRLLLSSKGIDQKMRVLNACFNVKRIPGKSSSVIRCTRLMKEKIERGEVEVDDAFVEEKMEVDTIDWKSRYEQLEKRFESLKQRVNEKYNNWVIKARKDNENMYSLQNVISQQQAHINELQIYNNKLERDLQSKIGSVISSIEWYLRSMELSDDIKSDIEQQLNSIDQINPVNAYDDFESILRNLISDYDRMFIMFKGLLQQSNYIYTYE.

The segment at 1–149 (MLKMESTQQM…TRLMKEKIER (149 aa)) is RNA-binding. The interval 150 to 206 (GEVEVDDAFVEEKMEVDTIDWKSRYEQLEKRFESLKQRVNEKYNNWVIKARKDNENM) is dimerization. Residues 166–237 (DTIDWKSRYE…NKLERDLQSK (72 aa)) are a coiled coil. The segment at 170–234 (WKSRYEQLEK…IYNNKLERDL (65 aa)) is interaction with host ZC3H7B. The interaction with host EIF4G1 stretch occupies residues 208-313 (SLQNVISQQQ…QQSNYIYTYE (106 aa)).

The protein belongs to the rotavirus NSP3 family. As to quaternary structure, homodimer. Interacts (via the coiled-coil region) with host ZC3H7B (via LD motif). Interacts with host EIF4G1.

It localises to the host cytoplasm. Plays an important role in stimulating the translation of viral mRNAs. These mRNAs are capped but not polyadenylated, instead terminating in a conserved sequence 'GACC' at the 3' that is recognized by NSP3, which competes with host PABPC1 for EIF4G1 binding. The interaction between NSP3 and host EIF4G1 stabilizes the EIF4E-EIF4G1 interaction, thereby facilitating the initiation of capped mRNA translation. The polypeptide is Non-structural protein 3 (Rotavirus A (strain RVA/Human/Indonesia/69M/1980/G8P4[10]) (RV-A)).